A 436-amino-acid polypeptide reads, in one-letter code: T-box transcription factor T (436 aa).

A DNA-binding region (T-box) is located at residues 51–219 (LWLRFKELTN…YNPFAKAFLD (169 aa)).

As to quaternary structure, monomer. Binds DNA as a monomer.

The protein resides in the nucleus. Involved in the transcriptional regulation of genes required for mesoderm formation and differentiation. Binds to a palindromic T site 5'-TTCACACCTAGGTGTGAA-3' DNA sequence and activates gene transcription when bound to such a site. The polypeptide is T-box transcription factor T (Mus musculus (Mouse)).